Reading from the N-terminus, the 319-residue chain is Olfactory receptor 8U8 (319 aa).

The Extracellular portion of the chain corresponds to 1–28 (MAHINCTQATEFILVGLTDHQELKMPLF). A glycan (N-linked (GlcNAc...) asparagine) is linked at N5. The chain crosses the membrane as a helical span at residues 29 to 49 (VLFLSIYLFTVVGNLGLILLI). Residues 50–56 (RADTSLN) are Cytoplasmic-facing. A helical membrane pass occupies residues 57 to 77 (TPMYFFLSNLAFVDFCYSSVI). Residues 78–97 (TPKMLGNFLYKQNVISFDAC) are Extracellular-facing. C97 and C179 are joined by a disulfide. A helical transmembrane segment spans residues 98-118 (ATQLGCFLTFMVSESLLLASM). The Cytoplasmic portion of the chain corresponds to 119–122 (AYDR). The chain crosses the membrane as a helical span at residues 123 to 143 (YVAICNPLLYMVVMTPGICIQ). The Extracellular segment spans residues 144–204 (LVAVPYSYSF…KQLWILACAG (61 aa)). Residues 205–225 (ITFICSVLIVFVSYMFIIFAI) form a helical membrane-spanning segment. Topologically, residues 226-239 (LRMSSAEGRRKAFS) are cytoplasmic. A helical membrane pass occupies residues 240 to 260 (TCSSHMLAVTIFYGTLIFMYL). The Extracellular segment spans residues 261 to 271 (QPSSSHSLDAD). A helical transmembrane segment spans residues 272–292 (KMASVFYTVIIPMLNPLIYSL). At 293–319 (RNKDVKDALKKVIINRNHAFIFLKLRK) the chain is on the cytoplasmic side.

The protein belongs to the G-protein coupled receptor 1 family.

Its subcellular location is the cell membrane. Its function is as follows. Odorant receptor. The protein is Olfactory receptor 8U8 (OR8U8) of Homo sapiens (Human).